Here is a 438-residue protein sequence, read N- to C-terminus: Probable trafficking protein particle complex subunit 13 homolog (438 aa).

The protein belongs to the TRAPPC13 family.

The chain is Probable trafficking protein particle complex subunit 13 homolog from Drosophila melanogaster (Fruit fly).